The primary structure comprises 258 residues: ProSAAS (258 aa).

The N-terminal stretch at 1-33 (MAGSPLLCGPRAGGVGILVLLLLGLLRLPPTLS) is a signal peptide. Positions 34-213 (ARPVKEPRSL…SSEPEAAPAP (180 aa)) are proSAAS(1-180). Disordered regions lie at residues 156–188 (PAPAAAPRPRPPVYDDGPTGPDVEDAGDETPDV), 204–230 (SSEPEAAPAPRRLRRSVDQDLGPEVPP), and 239–258 (RVKRLENPSPQAPARRLLPP). Over residues 177-188 (DVEDAGDETPDV) the composition is skewed to acidic residues. Residues 204 to 213 (SSEPEAAPAP) show a composition bias toward low complexity. Positions 219 to 258 (SVDQDLGPEVPPENVLGALLRVKRLENPSPQAPARRLLPP) are C-terminal inhibitory domain; interacts with PCSK1. A Sufficient for inhibition of PCSK1 motif is present at residues 237–242 (LLRVKR).

In terms of assembly, interacts via the C-terminal inhibitory domain with PCSK1 66 kDa form. In terms of processing, proteolytically cleaved in the Golgi. Little SAAS, PEN, PEN-20 and Big LEN are the major processed peptides in proSAAS-overexpressing AtT-20 pituitary corticotropic cell line. In terms of tissue distribution, expressed in brain (mostly hypothalamus and pituitary) and gut. Expressed in trigeminal ganglia and neuroendocrine cell lines. As to expression, expressed in pancreas, spinal cord and brain (most abundant in striatum, hippocampus, pons and medulla, and cortex) (at protein level).

The protein localises to the secreted. It localises to the golgi apparatus. The protein resides in the trans-Golgi network. Its function is as follows. May function in the control of the neuroendocrine secretory pathway. Proposed be a specific endogenous inhibitor of PCSK1. ProSAAS and Big PEN-LEN, both containing the C-terminal inhibitory domain, but not the processed peptides reduce PCSK1 activity in the endoplasmic reticulum and Golgi. It reduces the activity of the 87 kDa form but not the autocatalytically derived 66 kDa form of PCSK1. Subsequent processing of proSAAS may eliminate the inhibition. Slows down convertase-mediated processing of proopiomelanocortin and proenkephalin. May control the intracellular timing of PCSK1 rather than its total level of activity. In terms of biological role, endogenous ligand for GPR171. Neuropeptide involved in the regulation of feeding. Endogenous ligand for GPR171. Neuropeptide involved in the regulation of feeding. This Mus musculus (Mouse) protein is ProSAAS (Pcsk1n).